Reading from the N-terminus, the 623-residue chain is Xaa-Pro aminopeptidase 1 (623 aa).

Arg77 is a binding site for a peptide. N6-acetyllysine is present on Lys304. An a peptide-binding site is contributed by His395. Residues Asp415, Asp426, and His489 each coordinate Mn(2+). Residues His489, His498, and Glu523 each contribute to the a peptide site. Residues Glu523 and Glu537 each coordinate Mn(2+).

It belongs to the peptidase M24B family. In terms of assembly, homodimer. Requires Mn(2+) as cofactor.

It is found in the cytoplasm. The protein localises to the cytosol. It catalyses the reaction Release of any N-terminal amino acid, including proline, that is linked to proline, even from a dipeptide or tripeptide.. Functionally, metalloaminopeptidase that catalyzes the removal of a penultimate prolyl residue from the N-termini of peptides, such as Arg-Pro-Pro. Contributes to the degradation of bradykinin. The chain is Xaa-Pro aminopeptidase 1 from Mus musculus (Mouse).